Consider the following 741-residue polypeptide: Protein O-mannosyl-transferase TMTC4 (741 aa).

The Cytoplasmic segment spans residues 1-10 (MVELDADLDH). Residues 11–31 (IVPSVLPPFWAKLVVGFVSLL) traverse the membrane as a helical segment. Residues 32 to 110 (CFARSYDGDF…FHPVGFHVVN (79 aa)) lie on the Extracellular side of the membrane. Residue Asn77 is glycosylated (N-linked (GlcNAc...) asparagine). A helical membrane pass occupies residues 111–131 (ILLHGSISILMLDVFSVLFGG). The Cytoplasmic portion of the chain corresponds to 132–146 (LQYTGKGQRVHLAPR). 2 helical membrane-spanning segments follow: residues 147 to 166 (ASLL…ECVA) and 167 to 185 (GVVG…LSFL). The Cytoplasmic portion of the chain corresponds to 186 to 198 (GYCQAFKETGNKE). Residues 199–219 (GTHSSTFWVLLSIFLGAVAML) form a helical membrane-spanning segment. Topologically, residues 220 to 224 (CKEQG) are extracellular. A helical transmembrane segment spans residues 225-245 (ITVLGLNAVFDILVIGKLDIL). Over 246–265 (AAVRKVLHKDKSQENAGMFK) the chain is Cytoplasmic. A helical transmembrane segment spans residues 266-286 (NGGLLFRIALLTIGGTSMLYI). Residues 287–354 (RWKIMGTGPP…PLIKSVGDWR (68 aa)) are Extracellular-facing. Residues 355–375 (VIALAALWLCLIGLIFQALCS) traverse the membrane as a helical segment. At 376–382 (EDSCKRR) the chain is on the cytoplasmic side. A helical transmembrane segment spans residues 383-403 (ILTLGLGFLVIPFLPASNLFF). Residues 404-412 (RVGFVVAER) are Extracellular-facing. Residues 413 to 433 (VLYLPSAGYCVLLTFGFGALS) traverse the membrane as a helical segment. Residues 434-441 (RHTKKKKP) lie on the Cytoplasmic side of the membrane. The chain crosses the membrane as a helical span at residues 442-462 (VAAIILGILLINALRCVIRSG). At 463 to 741 (EWRSEEQLFR…KLEQTQKKDV (279 aa)) the chain is on the extracellular side. TPR repeat units lie at residues 482-515 (AKVH…NPKY), 516-549 (VHAM…QPDF), 550-583 (AAAW…RRKY), 584-617 (PDCY…KPEH), 618-651 (SLAW…IPND), 652-685 (HSLM…NPNV), and 686-719 (ASYH…DPVA). Asn497 carries an N-linked (GlcNAc...) asparagine glycan. N-linked (GlcNAc...) asparagine glycosylation is present at Asn609. Asn725 is a glycosylation site (N-linked (GlcNAc...) asparagine).

It belongs to the TMTC family.

Its subcellular location is the membrane. It localises to the endoplasmic reticulum. It carries out the reaction a di-trans,poly-cis-dolichyl beta-D-mannosyl phosphate + L-seryl-[protein] = 3-O-(alpha-D-mannosyl)-L-seryl-[protein] + a di-trans,poly-cis-dolichyl phosphate + H(+). The enzyme catalyses a di-trans,poly-cis-dolichyl beta-D-mannosyl phosphate + L-threonyl-[protein] = 3-O-(alpha-D-mannosyl)-L-threonyl-[protein] + a di-trans,poly-cis-dolichyl phosphate + H(+). It functions in the pathway protein modification; protein glycosylation. Transfers mannosyl residues to the hydroxyl group of serine or threonine residues. The 4 members of the TMTC family are O-mannosyl-transferases dedicated primarily to the cadherin superfamily, each member seems to have a distinct role in decorating the cadherin domains with O-linked mannose glycans at specific regions. Also acts as O-mannosyl-transferase on other proteins such as PDIA3. This chain is Protein O-mannosyl-transferase TMTC4, found in Mus musculus (Mouse).